The following is a 185-amino-acid chain: Adenine phosphoribosyltransferase (185 aa).

The protein belongs to the purine/pyrimidine phosphoribosyltransferase family. In terms of assembly, homodimer.

It localises to the cytoplasm. The enzyme catalyses AMP + diphosphate = 5-phospho-alpha-D-ribose 1-diphosphate + adenine. It participates in purine metabolism; AMP biosynthesis via salvage pathway; AMP from adenine: step 1/1. Functionally, catalyzes a salvage reaction resulting in the formation of AMP, that is energically less costly than de novo synthesis. This is Adenine phosphoribosyltransferase from Pectobacterium carotovorum subsp. carotovorum (strain PC1).